The primary structure comprises 40 residues: Photosystem II reaction center protein J (40 aa).

The chain crosses the membrane as a helical span at residues 8–28; sequence IPLWIIGTVTGIFGIGLIGIF.

The protein belongs to the PsbJ family. PSII is composed of 1 copy each of membrane proteins PsbA, PsbB, PsbC, PsbD, PsbE, PsbF, PsbH, PsbI, PsbJ, PsbK, PsbL, PsbM, PsbT, PsbX, PsbY, PsbZ, Psb30/Ycf12, at least 3 peripheral proteins of the oxygen-evolving complex and a large number of cofactors. It forms dimeric complexes.

It is found in the plastid membrane. Functionally, one of the components of the core complex of photosystem II (PSII). PSII is a light-driven water:plastoquinone oxidoreductase that uses light energy to abstract electrons from H(2)O, generating O(2) and a proton gradient subsequently used for ATP formation. It consists of a core antenna complex that captures photons, and an electron transfer chain that converts photonic excitation into a charge separation. The chain is Photosystem II reaction center protein J from Cuscuta reflexa (Southern Asian dodder).